The sequence spans 130 residues: Mini-ribonuclease 3 (130 aa).

The active site involves D19. The interval 69–91 (EQDVVRRGRNAKGHGAPKSADPA) is disordered.

It belongs to the MrnC RNase family. In terms of assembly, homodimer. Requires Mg(2+) as cofactor.

The protein resides in the cytoplasm. Functionally, involved in correct processing of both the 5' and 3' ends of 23S rRNA precursor. Processes 30S rRNA precursor transcript even in absence of ribonuclease 3 (Rnc); Rnc processes 30S rRNA into smaller rRNA precursors. The sequence is that of Mini-ribonuclease 3 from Symbiobacterium thermophilum (strain DSM 24528 / JCM 14929 / IAM 14863 / T).